The primary structure comprises 359 residues: DNA replication and repair protein RecF (359 aa).

30–37 provides a ligand contact to ATP; it reads GPNGSGKT.

It belongs to the RecF family.

The protein resides in the cytoplasm. Functionally, the RecF protein is involved in DNA metabolism; it is required for DNA replication and normal SOS inducibility. RecF binds preferentially to single-stranded, linear DNA. It also seems to bind ATP. The polypeptide is DNA replication and repair protein RecF (Aliivibrio fischeri (strain MJ11) (Vibrio fischeri)).